A 251-amino-acid polypeptide reads, in one-letter code: Adenylate kinase (251 aa).

46 to 51 is a binding site for ATP; sequence GAGKGT. The NMP stretch occupies residues 66–95; that stretch reads ATGDMLRSQVQQQTPLGVEAKKIMDAGGLV. Residues Thr67, Arg72, 93–95, 122–125, and Gln129 each bind AMP; these read GLV and GFPR. The segment at 163–200 is LID; the sequence is GRLVHPASGRSYHKVFNPPKKEMIDDITGEALVQRSDD. Residues Arg164 and 173-174 contribute to the ATP site; that span reads SY. Residues Arg197 and Arg208 each coordinate AMP. Gln236 lines the ATP pocket.

This sequence belongs to the adenylate kinase family. AK2 subfamily. Monomer.

Its subcellular location is the cytoplasm. The protein localises to the cytosol. It is found in the mitochondrion intermembrane space. It catalyses the reaction AMP + ATP = 2 ADP. Functionally, catalyzes the reversible transfer of the terminal phosphate group between ATP and AMP. Plays an important role in cellular energy homeostasis and in adenine nucleotide metabolism. Adenylate kinase activity is critical for regulation of the phosphate utilization and the AMP de novo biosynthesis pathways. This is Adenylate kinase from Yarrowia lipolytica (strain CLIB 122 / E 150) (Yeast).